The following is a 782-amino-acid chain: uncharacterized protein (782 aa).

Disordered regions lie at residues 1 to 25 (MFSP…STTS) and 175 to 195 (RPRT…EDLR). Low complexity predominate over residues 13 to 25 (ESESVSNCESTTS). The span at 183–195 (RAGDASMSREDLR) shows a compositional bias: basic and acidic residues. Coiled-coil stretches lie at residues 223–331 (RENR…STLN), 348–398 (LSQF…VSTL), 428–601 (NRIN…QLLN), and 699–743 (TIET…IIAK). Positions 748-782 (NIPKTEKSSPMKKVPPIENFRAKSQTSITGLSPVL) are disordered. Positions 769–782 (AKSQTSITGLSPVL) are enriched in polar residues.

This is an uncharacterized protein from Caenorhabditis elegans.